The following is a 163-amino-acid chain: MHYTRISPALVPSLSPTAAAESSGGGTMIATVFMALLLPCVGMCIVFLIYLFLLWCSTRRRIERLRFAEPVKPVTGKGLSVLELEKIPKLTGRELAVIARSTECAVCLEDIESGQSTRLVPGCNHGFHQLCADTWLSNHTVCPVCRAELAPNLPQCNENQSPC.

Residues 35–55 (ALLLPCVGMCIVFLIYLFLLW) form a helical membrane-spanning segment. Residues 104 to 146 (CAVCLEDIESGQSTRLVPGCNHGFHQLCADTWLSNHTVCPVCR) form an RING-type; atypical zinc finger.

The protein belongs to the RING-type zinc finger family. ATL subfamily.

Its subcellular location is the membrane. The catalysed reaction is S-ubiquitinyl-[E2 ubiquitin-conjugating enzyme]-L-cysteine + [acceptor protein]-L-lysine = [E2 ubiquitin-conjugating enzyme]-L-cysteine + N(6)-ubiquitinyl-[acceptor protein]-L-lysine.. It functions in the pathway protein modification; protein ubiquitination. Its function is as follows. E3 ubiquitin-protein ligase able to catalyze polyubiquitination with ubiquitin-conjugating enzyme E2 UBC8, UBC10, UBC11, UBC28 and UBC29 in vitro. The sequence is that of E3 ubiquitin-protein ligase ATL23 (ATL23) from Arabidopsis thaliana (Mouse-ear cress).